We begin with the raw amino-acid sequence, 818 residues long: Lon protease (818 aa).

The Lon N-terminal domain maps to 14-216 (LPVLPLRDVV…KVFALIEREI (203 aa)). ATP is bound at residue 370-377 (GPPGVGKT). In terms of domain architecture, Lon proteolytic spans 605–786 (ESLVGIVTGL…DEVIKVALMH (182 aa)). Residues serine 692 and lysine 735 contribute to the active site.

It belongs to the peptidase S16 family. In terms of assembly, homohexamer. Organized in a ring with a central cavity.

It localises to the cytoplasm. The catalysed reaction is Hydrolysis of proteins in presence of ATP.. Its function is as follows. ATP-dependent serine protease that mediates the selective degradation of mutant and abnormal proteins as well as certain short-lived regulatory proteins. Required for cellular homeostasis and for survival from DNA damage and developmental changes induced by stress. Degrades polypeptides processively to yield small peptide fragments that are 5 to 10 amino acids long. Binds to DNA in a double-stranded, site-specific manner. In Wolbachia pipientis subsp. Culex pipiens (strain wPip), this protein is Lon protease.